The following is a 423-amino-acid chain: Adenylosuccinate synthetase (423 aa).

Residues 12–18 (GDEGKGK) and 40–42 (GHT) each bind GTP. Asp-13 serves as the catalytic Proton acceptor. The Mg(2+) site is built by Asp-13 and Gly-40. IMP-binding positions include 13 to 16 (DEGK), 38 to 41 (NAGH), Thr-129, Arg-143, Gln-221, Thr-236, and Arg-300. His-41 serves as the catalytic Proton donor. 296–302 (SVTGRKR) is a substrate binding site. Residues Arg-302, 328 to 330 (KSD), and 408 to 410 (SVG) each bind GTP.

This sequence belongs to the adenylosuccinate synthetase family. As to quaternary structure, homodimer. Requires Mg(2+) as cofactor.

It is found in the cytoplasm. The enzyme catalyses IMP + L-aspartate + GTP = N(6)-(1,2-dicarboxyethyl)-AMP + GDP + phosphate + 2 H(+). It participates in purine metabolism; AMP biosynthesis via de novo pathway; AMP from IMP: step 1/2. Plays an important role in the de novo pathway of purine nucleotide biosynthesis. Catalyzes the first committed step in the biosynthesis of AMP from IMP. The protein is Adenylosuccinate synthetase of Bacteroides fragilis (strain ATCC 25285 / DSM 2151 / CCUG 4856 / JCM 11019 / LMG 10263 / NCTC 9343 / Onslow / VPI 2553 / EN-2).